The chain runs to 497 residues: Protein root UVB sensitive 6 (497 aa).

Belongs to the RUS1 family.

In terms of biological role, required for normal embryo development. This chain is Protein root UVB sensitive 6, found in Arabidopsis thaliana (Mouse-ear cress).